A 160-amino-acid chain; its full sequence is SsrA-binding protein (160 aa).

This sequence belongs to the SmpB family.

The protein resides in the cytoplasm. Functionally, required for rescue of stalled ribosomes mediated by trans-translation. Binds to transfer-messenger RNA (tmRNA), required for stable association of tmRNA with ribosomes. tmRNA and SmpB together mimic tRNA shape, replacing the anticodon stem-loop with SmpB. tmRNA is encoded by the ssrA gene; the 2 termini fold to resemble tRNA(Ala) and it encodes a 'tag peptide', a short internal open reading frame. During trans-translation Ala-aminoacylated tmRNA acts like a tRNA, entering the A-site of stalled ribosomes, displacing the stalled mRNA. The ribosome then switches to translate the ORF on the tmRNA; the nascent peptide is terminated with the 'tag peptide' encoded by the tmRNA and targeted for degradation. The ribosome is freed to recommence translation, which seems to be the essential function of trans-translation. In Escherichia coli O6:K15:H31 (strain 536 / UPEC), this protein is SsrA-binding protein.